The following is a 312-amino-acid chain: Olfactory receptor 6C76 (312 aa).

The Extracellular segment spans residues 1–23 (MKNRTSVTDFILLGLTDNPQLQV). Asn-3 is a glycosylation site (N-linked (GlcNAc...) asparagine). The chain crosses the membrane as a helical span at residues 24 to 44 (VIFSFLFLTYVLSVTGNLTII). The Cytoplasmic segment spans residues 45–57 (SLTLLDSHLKTPM). A helical membrane pass occupies residues 58-80 (YFFLRNFSLEISFTSVCNPRFLI). The Extracellular segment spans residues 81-94 (SILTGDKSISYNAC). The cysteines at positions 94 and 176 are disulfide-linked. The chain crosses the membrane as a helical span at residues 95–115 (AAQLFFFIFLGSTEFFLLASM). Topologically, residues 116–142 (SYDCYVAICKPLHYTTIMSDRICYQLI) are cytoplasmic. The chain crosses the membrane as a helical span at residues 143-163 (ISSWLAGFLVIFPPLAMGLQL). Topologically, residues 164 to 195 (DFCDSNVIDHFTCDSAPLLQISCTDTSTLELM) are extracellular. The chain crosses the membrane as a helical span at residues 196–216 (SFILALFTLISTLILVILSYT). Over 217-238 (YIIRTILRIPSAQQRKKAFSTC) the chain is Cytoplasmic. Residues 239 to 259 (SSHVIVVSISYGSCIFMYVKT) traverse the membrane as a helical segment. Over 260–267 (SAKEGVAL) the chain is Extracellular. The helical transmembrane segment at 268–288 (TKGVAILNTSVAPMLNPFIYT) threads the bilayer. Over 289 to 312 (LRNQQVKQAFKDVLRKISHKKKKH) the chain is Cytoplasmic.

It belongs to the G-protein coupled receptor 1 family.

It is found in the cell membrane. Its function is as follows. Odorant receptor. This is Olfactory receptor 6C76 (OR6C76) from Homo sapiens (Human).